Reading from the N-terminus, the 437-residue chain is Adenylosuccinate synthetase (437 aa).

GTP is bound by residues 12–18 (GDEGKGK) and 40–42 (GHT). Catalysis depends on D13, which acts as the Proton acceptor. The Mg(2+) site is built by D13 and G40. IMP contacts are provided by residues 13–16 (DEGK), 38–41 (NAGH), T128, R142, Q223, T238, and R302. H41 (proton donor) is an active-site residue. The tract at residues 119 to 138 (QRGERRIGTTGRGIGPTYAD) is disordered. 298-304 (TTTGRRR) provides a ligand contact to substrate. GTP is bound by residues R304, 330-332 (KLD), and 412-414 (SLG).

Belongs to the adenylosuccinate synthetase family. Homodimer. It depends on Mg(2+) as a cofactor.

It localises to the cytoplasm. It carries out the reaction IMP + L-aspartate + GTP = N(6)-(1,2-dicarboxyethyl)-AMP + GDP + phosphate + 2 H(+). Its pathway is purine metabolism; AMP biosynthesis via de novo pathway; AMP from IMP: step 1/2. Functionally, plays an important role in the de novo pathway of purine nucleotide biosynthesis. Catalyzes the first committed step in the biosynthesis of AMP from IMP. The sequence is that of Adenylosuccinate synthetase from Synechococcus sp. (strain WH7803).